Reading from the N-terminus, the 420-residue chain is Phosphatidylinositol 5-phosphate 4-kinase type-2 gamma (420 aa).

Residue alanine 2 is modified to N-acetylalanine. Serine 26 is modified (phosphoserine). The PIPK domain occupies 43-419 (AADPLVGVFL…RFLDFISNIF (377 aa)). A required for interaction with PIP5K1A region spans residues 69-75 (VMLLPDD). Phosphoserine is present on serine 349.

Interacts with PIP5K1A; the interaction inhibits PIP5K1A kinase activity. In terms of processing, phosphorylated, phosphorylation is induced by EGF. As to expression, widely expressed, with the most abundant expression in kidney.

The protein resides in the endoplasmic reticulum. Its subcellular location is the cytoplasm. The catalysed reaction is a 1,2-diacyl-sn-glycero-3-phospho-(1D-myo-inositol-5-phosphate) + ATP = a 1,2-diacyl-sn-glycero-3-phospho-(1D-myo-inositol-4,5-bisphosphate) + ADP + H(+). The enzyme catalyses 1,2-dihexadecanoyl-sn-glycero-3-phospho-(1D-myo-inositol-5-phosphate) + ATP = 1,2-dihexadecanoyl-sn-glycero-3-phospho-(1D-myo-inositol-4,5-bisphosphate) + ADP + H(+). It carries out the reaction 1,2-dihexadecanoyl-sn-glycero-3-phospho-(1D-myo-inositol-5-phosphate) + GTP = 1,2-dihexadecanoyl-sn-glycero-3-phospho-(1D-myo-inositol-4,5-bisphosphate) + GDP + H(+). Functionally, phosphatidylinositol 5-phosphate 4-kinase with low enzymatic activity. May be a GTP sensor, has higher GTP-dependent kinase activity than ATP-dependent kinase activity. PIP4Ks negatively regulate insulin signaling through a catalytic-independent mechanism. They interact with PIP5Ks and suppress PIP5K-mediated PtdIns(4,5)P2 synthesis and insulin-dependent conversion to PtdIns(3,4,5)P3. This Rattus norvegicus (Rat) protein is Phosphatidylinositol 5-phosphate 4-kinase type-2 gamma.